The primary structure comprises 88 residues: Small ribosomal subunit protein uS15 (88 aa).

This sequence belongs to the universal ribosomal protein uS15 family. As to quaternary structure, part of the 30S ribosomal subunit. Forms a bridge to the 50S subunit in the 70S ribosome, contacting the 23S rRNA.

One of the primary rRNA binding proteins, it binds directly to 16S rRNA where it helps nucleate assembly of the platform of the 30S subunit by binding and bridging several RNA helices of the 16S rRNA. In terms of biological role, forms an intersubunit bridge (bridge B4) with the 23S rRNA of the 50S subunit in the ribosome. In Metamycoplasma arthritidis (strain 158L3-1) (Mycoplasma arthritidis), this protein is Small ribosomal subunit protein uS15.